The following is a 501-amino-acid chain: Aspartyl/glutamyl-tRNA(Asn/Gln) amidotransferase subunit B (501 aa).

The interval 271 to 299 (VQETRHYQETDGSTSKGRPKETAEDYRYF) is disordered. Over residues 288–299 (RPKETAEDYRYF) the composition is skewed to basic and acidic residues.

It belongs to the GatB/GatE family. GatB subfamily. As to quaternary structure, heterotrimer of A, B and C subunits.

The catalysed reaction is L-glutamyl-tRNA(Gln) + L-glutamine + ATP + H2O = L-glutaminyl-tRNA(Gln) + L-glutamate + ADP + phosphate + H(+). It catalyses the reaction L-aspartyl-tRNA(Asn) + L-glutamine + ATP + H2O = L-asparaginyl-tRNA(Asn) + L-glutamate + ADP + phosphate + 2 H(+). Functionally, allows the formation of correctly charged Asn-tRNA(Asn) or Gln-tRNA(Gln) through the transamidation of misacylated Asp-tRNA(Asn) or Glu-tRNA(Gln) in organisms which lack either or both of asparaginyl-tRNA or glutaminyl-tRNA synthetases. The reaction takes place in the presence of glutamine and ATP through an activated phospho-Asp-tRNA(Asn) or phospho-Glu-tRNA(Gln). The sequence is that of Aspartyl/glutamyl-tRNA(Asn/Gln) amidotransferase subunit B from Corynebacterium diphtheriae (strain ATCC 700971 / NCTC 13129 / Biotype gravis).